We begin with the raw amino-acid sequence, 197 residues long: ATP-dependent Clp protease proteolytic subunit (197 aa).

Ser-100 (nucleophile) is an active-site residue. Residue His-125 is part of the active site.

The protein belongs to the peptidase S14 family. In terms of assembly, component of the chloroplastic Clp protease core complex.

The protein localises to the plastid. It localises to the chloroplast stroma. The catalysed reaction is Hydrolysis of proteins to small peptides in the presence of ATP and magnesium. alpha-casein is the usual test substrate. In the absence of ATP, only oligopeptides shorter than five residues are hydrolyzed (such as succinyl-Leu-Tyr-|-NHMec, and Leu-Tyr-Leu-|-Tyr-Trp, in which cleavage of the -Tyr-|-Leu- and -Tyr-|-Trp bonds also occurs).. Cleaves peptides in various proteins in a process that requires ATP hydrolysis. Has a chymotrypsin-like activity. Plays a major role in the degradation of misfolded proteins. The protein is ATP-dependent Clp protease proteolytic subunit of Angiopteris evecta (Mule's foot fern).